Reading from the N-terminus, the 175-residue chain is Alpha-crystallin B chain (175 aa).

The residue at position 1 (M1) is an N-acetylmethionine. A phosphoserine mark is found at S19, S45, and S59. One can recognise a sHSP domain in the interval 56-164 (RAPSWIDTGL…PERTIPITRE (109 aa)). H83 contributes to the Zn(2+) binding site. The residue at position 92 (K92) is an N6-acetyllysine. Zn(2+) is bound by residues H104, E106, H111, and H119. The segment at 145–175 (VNGPRKQASGPERTIPITREEKPAVTAAPKK) is disordered. N6-acetyllysine is present on K166. O-linked (GlcNAc) threonine glycosylation is present at T170.

This sequence belongs to the small heat shock protein (HSP20) family. Heteromer composed of three CRYAA and one CRYAB subunits. Aggregates with homologous proteins, including the small heat shock protein HSPB1, to form large heteromeric complexes. Inter-subunit bridging via zinc ions enhances stability, which is crucial as there is no protein turn over in the lens. Interacts with HSPBAP1 and TTN/titin. Interacts with TMEM109; in the cellular response to DNA damage. Interacts with DES; binds rapidly during early stages of DES filament assembly and a reduced binding seen in the later stages. Interacts with TMED10; the interaction mediates the translocation from the cytoplasm into the ERGIC (endoplasmic reticulum-Golgi intermediate compartment) and thereby secretion. Interacts with ATP6V1A and with MTOR, forming a ternary complex. In terms of tissue distribution, lens as well as other tissues.

The protein localises to the cytoplasm. The protein resides in the nucleus. Its subcellular location is the secreted. It is found in the lysosome. Its function is as follows. May contribute to the transparency and refractive index of the lens. Has chaperone-like activity, preventing aggregation of various proteins under a wide range of stress conditions. In lens epithelial cells, stabilizes the ATP6V1A protein, preventing its degradation by the proteasome. This chain is Alpha-crystallin B chain (CRYAB), found in Mesocricetus auratus (Golden hamster).